The sequence spans 454 residues: tRNA modification GTPase MnmE (454 aa).

3 residues coordinate (6S)-5-formyl-5,6,7,8-tetrahydrofolate: R23, E80, and K120. A TrmE-type G domain is found at 216–377; sequence GMKVVIAGRP…LRDHLKQSMG (162 aa). K(+) is bound at residue N226. Residues 226–231, 245–251, 270–273, 335–338, and 358–360 contribute to the GTP site; these read NAGKSS, TDIAGTT, DTAG, NKAD, and SAR. S230 lines the Mg(2+) pocket. K(+) is bound by residues T245, I247, and T250. T251 provides a ligand contact to Mg(2+). K454 is a binding site for (6S)-5-formyl-5,6,7,8-tetrahydrofolate.

Belongs to the TRAFAC class TrmE-Era-EngA-EngB-Septin-like GTPase superfamily. TrmE GTPase family. As to quaternary structure, homodimer. Heterotetramer of two MnmE and two MnmG subunits. K(+) serves as cofactor.

The protein resides in the cytoplasm. Exhibits a very high intrinsic GTPase hydrolysis rate. Involved in the addition of a carboxymethylaminomethyl (cmnm) group at the wobble position (U34) of certain tRNAs, forming tRNA-cmnm(5)s(2)U34. This is tRNA modification GTPase MnmE from Yersinia pseudotuberculosis serotype O:3 (strain YPIII).